The chain runs to 1218 residues: Thrombospondin type 1 domain-containing protein (1218 aa).

Disordered regions lie at residues 82-101 (SAGFPRSASSSASSAPPCSS), 189-240 (SLEE…SRTR), 298-383 (HTAN…VNGL), and 445-471 (GGKSRRSEWRRKRTGMMASEARESHRG). Residues 201–210 (GYEEERERRS) are compositionally biased toward basic and acidic residues. Low complexity predominate over residues 315–375 (SSRFTSKASS…SSPLSSSPDS (61 aa)). The TSP type-1 domain maps to 638 to 704 (SCITGPWSEW…RRKCNLGACP (67 aa)). Residues 886–906 (GVSHLWISLCAGAVAAVVFLV) form a helical membrane-spanning segment. Positions 1129–1153 (RRRARRGRREGDSGEGGDCGEARKA) are disordered.

In terms of assembly, component of a complex, at least composed of cysteine repeat modular protein A (CRMPa), cysteine repeat modular protein B (CRMPb), micronemal protein 15 (MIC15) and thrombospondin type 1 domain-containing protein (TSP1).

The protein localises to the membrane. Its function is as follows. Required for rhoptry secretion. Plays a role in host cell invasion. The polypeptide is Thrombospondin type 1 domain-containing protein (Toxoplasma gondii).